The following is a 499-amino-acid chain: Bifunctional purine biosynthesis protein PurH (499 aa).

One can recognise an MGS-like domain in the interval 1 to 144 (MIKRALISVF…KNFKDVVVLT (144 aa)).

This sequence belongs to the PurH family.

The catalysed reaction is (6R)-10-formyltetrahydrofolate + 5-amino-1-(5-phospho-beta-D-ribosyl)imidazole-4-carboxamide = 5-formamido-1-(5-phospho-D-ribosyl)imidazole-4-carboxamide + (6S)-5,6,7,8-tetrahydrofolate. It catalyses the reaction IMP + H2O = 5-formamido-1-(5-phospho-D-ribosyl)imidazole-4-carboxamide. It functions in the pathway purine metabolism; IMP biosynthesis via de novo pathway; 5-formamido-1-(5-phospho-D-ribosyl)imidazole-4-carboxamide from 5-amino-1-(5-phospho-D-ribosyl)imidazole-4-carboxamide (10-formyl THF route): step 1/1. Its pathway is purine metabolism; IMP biosynthesis via de novo pathway; IMP from 5-formamido-1-(5-phospho-D-ribosyl)imidazole-4-carboxamide: step 1/1. In Clostridium botulinum (strain Loch Maree / Type A3), this protein is Bifunctional purine biosynthesis protein PurH.